We begin with the raw amino-acid sequence, 233 residues long: Ribosomal RNA small subunit methyltransferase G (233 aa).

The tract at residues Met-1 to Thr-25 is disordered. The S-adenosyl-L-methionine site is built by Gly-85, Phe-90, and Arg-155.

This sequence belongs to the methyltransferase superfamily. RNA methyltransferase RsmG family.

The protein resides in the cytoplasm. The enzyme catalyses guanosine(527) in 16S rRNA + S-adenosyl-L-methionine = N(7)-methylguanosine(527) in 16S rRNA + S-adenosyl-L-homocysteine. Functionally, specifically methylates the N7 position of guanine in position 527 of 16S rRNA. The polypeptide is Ribosomal RNA small subunit methyltransferase G (Rhodopseudomonas palustris (strain BisB5)).